The chain runs to 425 residues: Serine--tRNA ligase (425 aa).

Residue 230 to 232 (TAE) coordinates L-serine. 261-263 (RAE) provides a ligand contact to ATP. E284 lines the L-serine pocket. An ATP-binding site is contributed by 348–351 (EISS). L-serine is bound at residue S384.

This sequence belongs to the class-II aminoacyl-tRNA synthetase family. Type-1 seryl-tRNA synthetase subfamily. Homodimer. The tRNA molecule binds across the dimer.

It localises to the cytoplasm. It carries out the reaction tRNA(Ser) + L-serine + ATP = L-seryl-tRNA(Ser) + AMP + diphosphate + H(+). The enzyme catalyses tRNA(Sec) + L-serine + ATP = L-seryl-tRNA(Sec) + AMP + diphosphate + H(+). It participates in aminoacyl-tRNA biosynthesis; selenocysteinyl-tRNA(Sec) biosynthesis; L-seryl-tRNA(Sec) from L-serine and tRNA(Sec): step 1/1. Functionally, catalyzes the attachment of serine to tRNA(Ser). Is also able to aminoacylate tRNA(Sec) with serine, to form the misacylated tRNA L-seryl-tRNA(Sec), which will be further converted into selenocysteinyl-tRNA(Sec). In Zymomonas mobilis subsp. mobilis (strain ATCC 31821 / ZM4 / CP4), this protein is Serine--tRNA ligase.